The primary structure comprises 159 residues: Putative ribosomal RNA large subunit methyltransferase H (159 aa).

Residues L76, G108, and 127-132 contribute to the S-adenosyl-L-methionine site; that span reads FSKMTF.

Belongs to the RNA methyltransferase RlmH family.

It is found in the cytoplasm. It carries out the reaction pseudouridine(1915) in 23S rRNA + S-adenosyl-L-methionine = N(3)-methylpseudouridine(1915) in 23S rRNA + S-adenosyl-L-homocysteine + H(+). Its function is as follows. Specifically methylates the pseudouridine at position 1915 (m3Psi1915) in 23S rRNA. The sequence is that of Putative ribosomal RNA large subunit methyltransferase H from Methanococcus maripaludis (strain C6 / ATCC BAA-1332).